The following is a 476-amino-acid chain: E3 SUMO-protein ligase EGR2 (476 aa).

A compositionally biased stretch (low complexity) spans 127–141 (PASTTASSSVTSASP). The segment at 127–178 (PASTTASSSVTSASPNPLATGPLGVCTMSQTQPDLDHLYSPPPPPPPYSGCA) is disordered. The HCFC1-binding-motif (HBM) signature appears at 162–165 (DHLY). Residue lysine 247 is modified to N6-acetyllysine; by EP300. 2 disordered regions span residues 275–300 (GPSAGVTGPGASGGSEGPRLPGSSSA) and 318–341 (RPILRPRKYPNRPSKTPVHERPYP). A compositionally biased stretch (gly residues) spans 281–290 (TGPGASGGSE). 3 consecutive C2H2-type zinc fingers follow at residues 340-364 (YPCPAEGCDRRFSRSDELTRHIRIH), 370-392 (FQCRICMRNFSRSDHLTTHIRTH), and 398-420 (FACDYCGRKFARSDERKRHTKIH). Positions 412 to 476 (ERKRHTKIHL…APCSSRTRTP (65 aa)) are disordered. Over residues 415-425 (RHTKIHLRQKE) the composition is skewed to basic residues. Over residues 429–476 (SAPSASVPAPSTASCSGGVQPGGTLCSSNSSSLGGGPLAPCSSRTRTP) the composition is skewed to low complexity.

Belongs to the EGR C2H2-type zinc-finger protein family. In terms of assembly, interacts with HCFC1. Interacts with WWP2. Interacts with UBC9. Interacts with CITED1. Interacts (via phosphorylated form) with SFN. In terms of processing, ubiquitinated by WWP2 leading to proteasomal degradation. Post-translationally, acetylated at Lys-247. May be deacetylated by HDAC6, HDAC10 or SIRT1.

Its subcellular location is the nucleus. It functions in the pathway protein modification; protein sumoylation. Its function is as follows. Sequence-specific DNA-binding transcription factor. Plays a role in hindbrain segmentation by regulating the expression of a subset of homeobox containing genes and in Schwann cell myelination by regulating the expression of genes involved in the formation and maintenance of myelin. Binds to two EGR2-consensus sites EGR2A (5'-CTGTAGGAG-3') and EGR2B (5'-ATGTAGGTG-3') in the HOXB3 enhancer and promotes HOXB3 transcriptional activation. Binds to specific DNA sites located in the promoter region of HOXA4, HOXB2 and ERBB2. Regulates hindbrain segmentation by controlling the expression of Hox genes, such as HOXA4, HOXB3 and HOXB2, and thereby specifying odd and even rhombomeres. Promotes the expression of HOXB3 in the rhombomere r5 in the hindbrain. Regulates myelination in the peripheral nervous system after birth, possibly by regulating the expression of myelin proteins, such as MPZ, and by promoting the differentiation of Schwann cells. Involved in the development of the jaw openener musculature, probably by playing a role in its innervation through trigeminal motor neurons. May play a role in adipogenesis, possibly by regulating the expression of CEBPB. In terms of biological role, E3 SUMO-protein ligase helping SUMO1 conjugation to its coregulators NAB1 and NAB2, whose sumoylation down-regulates EGR2 transcriptional activity. The polypeptide is E3 SUMO-protein ligase EGR2 (EGR2) (Homo sapiens (Human)).